The chain runs to 119 residues: Large ribosomal subunit protein bL20c (119 aa).

This sequence belongs to the bacterial ribosomal protein bL20 family.

The protein resides in the plastid. It is found in the chloroplast. Its function is as follows. Binds directly to 23S ribosomal RNA and is necessary for the in vitro assembly process of the 50S ribosomal subunit. It is not involved in the protein synthesizing functions of that subunit. The polypeptide is Large ribosomal subunit protein bL20c (Nandina domestica (Heavenly bamboo)).